A 506-amino-acid chain; its full sequence is ATP synthase subunit alpha (506 aa).

An ATP-binding site is contributed by 170 to 177 (GDRQTGKT).

Belongs to the ATPase alpha/beta chains family. In terms of assembly, F-type ATPases have 2 components, CF(1) - the catalytic core - and CF(0) - the membrane proton channel. CF(1) has five subunits: alpha(3), beta(3), gamma(1), delta(1), epsilon(1). CF(0) has four main subunits: a(1), b(1), b'(1) and c(9-12).

The protein resides in the cellular thylakoid membrane. It catalyses the reaction ATP + H2O + 4 H(+)(in) = ADP + phosphate + 5 H(+)(out). Its function is as follows. Produces ATP from ADP in the presence of a proton gradient across the membrane. The alpha chain is a regulatory subunit. The polypeptide is ATP synthase subunit alpha (Synechococcus sp. (strain CC9311)).